The primary structure comprises 284 residues: NAD kinase (284 aa).

Asp-65 serves as the catalytic Proton acceptor. NAD(+) is bound by residues 65-66, 139-140, Arg-150, Arg-167, Asp-169, and Gln-239; these read DG and ND.

The protein belongs to the NAD kinase family. A divalent metal cation serves as cofactor.

The protein resides in the cytoplasm. It catalyses the reaction NAD(+) + ATP = ADP + NADP(+) + H(+). In terms of biological role, involved in the regulation of the intracellular balance of NAD and NADP, and is a key enzyme in the biosynthesis of NADP. Catalyzes specifically the phosphorylation on 2'-hydroxyl of the adenosine moiety of NAD to yield NADP. The polypeptide is NAD kinase (Desulfatibacillum aliphaticivorans).